A 406-amino-acid chain; its full sequence is 4-hydroxy-3-methylbut-2-en-1-yl diphosphate synthase (flavodoxin) (406 aa).

The [4Fe-4S] cluster site is built by cysteine 297, cysteine 300, cysteine 343, and glutamate 350.

It belongs to the IspG family. In terms of assembly, homodimer. [4Fe-4S] cluster is required as a cofactor.

The enzyme catalyses (2E)-4-hydroxy-3-methylbut-2-enyl diphosphate + oxidized [flavodoxin] + H2O + 2 H(+) = 2-C-methyl-D-erythritol 2,4-cyclic diphosphate + reduced [flavodoxin]. The protein operates within isoprenoid biosynthesis; isopentenyl diphosphate biosynthesis via DXP pathway; isopentenyl diphosphate from 1-deoxy-D-xylulose 5-phosphate: step 5/6. In terms of biological role, converts 2C-methyl-D-erythritol 2,4-cyclodiphosphate (ME-2,4cPP) into 1-hydroxy-2-methyl-2-(E)-butenyl 4-diphosphate. This is 4-hydroxy-3-methylbut-2-en-1-yl diphosphate synthase (flavodoxin) from Thermus thermophilus (strain ATCC BAA-163 / DSM 7039 / HB27).